Here is a 246-residue protein sequence, read N- to C-terminus: 23S rRNA (guanosine-2'-O-)-methyltransferase RlmB (246 aa).

Residues Gly-197, Ile-217, and Leu-226 each contribute to the S-adenosyl-L-methionine site.

It belongs to the class IV-like SAM-binding methyltransferase superfamily. RNA methyltransferase TrmH family. RlmB subfamily.

It is found in the cytoplasm. The enzyme catalyses guanosine(2251) in 23S rRNA + S-adenosyl-L-methionine = 2'-O-methylguanosine(2251) in 23S rRNA + S-adenosyl-L-homocysteine + H(+). In terms of biological role, specifically methylates the ribose of guanosine 2251 in 23S rRNA. The sequence is that of 23S rRNA (guanosine-2'-O-)-methyltransferase RlmB from Haemophilus ducreyi (strain 35000HP / ATCC 700724).